The sequence spans 437 residues: Ribosomal protein uS12 methylthiotransferase RimO (437 aa).

One can recognise an MTTase N-terminal domain in the interval 3–118; that stretch reads KKFYITTLGC…AGKILREKFP (116 aa). C12, C48, C81, C157, C161, and C164 together coordinate [4Fe-4S] cluster. Residues 143–370 enclose the Radical SAM core domain; it reads NYSKPYAYVK…RDSHLEILEE (228 aa). In terms of domain architecture, TRAM spans 373-437; sequence ESRIGRTYDA…YEYDMNGTWV (65 aa).

This sequence belongs to the methylthiotransferase family. RimO subfamily. Requires [4Fe-4S] cluster as cofactor.

It localises to the cytoplasm. It catalyses the reaction L-aspartate(89)-[ribosomal protein uS12]-hydrogen + (sulfur carrier)-SH + AH2 + 2 S-adenosyl-L-methionine = 3-methylsulfanyl-L-aspartate(89)-[ribosomal protein uS12]-hydrogen + (sulfur carrier)-H + 5'-deoxyadenosine + L-methionine + A + S-adenosyl-L-homocysteine + 2 H(+). In terms of biological role, catalyzes the methylthiolation of an aspartic acid residue of ribosomal protein uS12. The protein is Ribosomal protein uS12 methylthiotransferase RimO of Leptospira interrogans serogroup Icterohaemorrhagiae serovar copenhageni (strain Fiocruz L1-130).